The sequence spans 196 residues: Mediator of RNA polymerase II transcription subunit 21 (196 aa).

Residues 52 to 111 are disordered; that stretch reads KIPKNASTPPVPASAPQAAQSQSQASPPPPDTANPQTGGQHADQQQQSPDGEGLPAPDSP. 2 stretches are compositionally biased toward low complexity: residues 65 to 76 and 87 to 98; these read SAPQAAQSQSQA and QTGGQHADQQQQ. Positions 144-174 form a coiled coil; that stretch reads SSEAEQERRIRELEGELRIVEGVREERRREL.

Belongs to the Mediator complex subunit 21 family. Component of the Mediator complex.

The protein localises to the nucleus. In terms of biological role, component of the Mediator complex, a coactivator involved in the regulated transcription of nearly all RNA polymerase II-dependent genes. Mediator functions as a bridge to convey information from gene-specific regulatory proteins to the basal RNA polymerase II transcription machinery. Mediator is recruited to promoters by direct interactions with regulatory proteins and serves as a scaffold for the assembly of a functional preinitiation complex with RNA polymerase II and the general transcription factors. This chain is Mediator of RNA polymerase II transcription subunit 21 (srb7), found in Aspergillus niger (strain ATCC MYA-4892 / CBS 513.88 / FGSC A1513).